Here is a 334-residue protein sequence, read N- to C-terminus: Nucleoid-associated protein YPN_2714 (334 aa).

Belongs to the YejK family.

Its subcellular location is the cytoplasm. It localises to the nucleoid. This is Nucleoid-associated protein YPN_2714 from Yersinia pestis bv. Antiqua (strain Nepal516).